Here is a 223-residue protein sequence, read N- to C-terminus: Oxaloacetate tautomerase FAHD1, mitochondrial (223 aa).

Residues 1 to 30 (MATSMIQRMFKQGTKIVCVGRNYAAHAKEL) constitute a mitochondrion transit peptide. Mg(2+)-binding residues include Glu-67, Glu-69, and Asp-98.

This sequence belongs to the FAH family. Mg(2+) serves as cofactor. Requires Mn(2+) as cofactor.

It is found in the mitochondrion. The enzyme catalyses oxaloacetate = enol-oxaloacetate. Tautomerase that converts enol-oxaloacetate, a strong inhibitor of succinate dehydrogenase, to the physiological keto form of oxaloacetate. This Arabidopsis thaliana (Mouse-ear cress) protein is Oxaloacetate tautomerase FAHD1, mitochondrial.